The primary structure comprises 374 residues: DNA replication and repair protein RecF (374 aa).

An ATP-binding site is contributed by G34–T41.

This sequence belongs to the RecF family.

The protein localises to the cytoplasm. Functionally, the RecF protein is involved in DNA metabolism; it is required for DNA replication and normal SOS inducibility. RecF binds preferentially to single-stranded, linear DNA. It also seems to bind ATP. In Allorhizobium ampelinum (strain ATCC BAA-846 / DSM 112012 / S4) (Agrobacterium vitis (strain S4)), this protein is DNA replication and repair protein RecF.